The sequence spans 176 residues: Calcineurin subunit B type 2 (176 aa).

Residue Gly-2 is the site of N-myristoyl glycine attachment. 4 consecutive EF-hand domains span residues 18 to 53, 57 to 85, 87 to 122, and 128 to 163; these read DEIKRLGRSFKKMDLDKSGSLSVDEFMSLPELQQNP, RVIDIFDTDGNGEVDFREFIVGTSQFSVK, DEEQKLRFAFRIYDMDNDGFISNGELFQVLKMMVGN, and QLQQLVDKSILVLDKDGDGRISFEEFRDVVRTMEIH. The Ca(2+) site is built by Asp-31, Asp-33, Ser-35, Ser-37, Glu-42, Asp-63, Asp-65, Asn-67, Glu-69, Glu-74, Asp-100, Asp-102, Asp-104, and Glu-111. The interval 131–136 is calcineurin A binding; it reads QLVDKS. Residues Asp-141, Asp-143, Asp-145, Arg-147, and Glu-152 each coordinate Ca(2+).

This sequence belongs to the calcineurin regulatory subunit family. Forms a complex composed of a calmodulin-dependent catalytic subunit (also known as calcineurin A) and a regulatory Ca(2+)-binding subunit (also known as calcineurin B). There are three catalytic subunits, each encoded by a separate gene (PPP3CA, PPP3CB, and PPP3CC) and two regulatory subunits which are also encoded by separate genes (PPP3R1 and PPP3R2). Interacts with SPATA33 (via PQIIIT motif). As to expression, testis specific.

The protein localises to the mitochondrion. In terms of biological role, regulatory subunit of calcineurin, a calcium-dependent, calmodulin stimulated protein phosphatase. Confers calcium sensitivity. The protein is Calcineurin subunit B type 2 (Ppp3r2) of Rattus norvegicus (Rat).